The sequence spans 760 residues: Xaa-Pro dipeptidyl-peptidase (760 aa).

Catalysis depends on charge relay system residues serine 349, aspartate 469, and histidine 499.

It belongs to the peptidase S15 family. In terms of assembly, homodimer.

It localises to the cytoplasm. It carries out the reaction Hydrolyzes Xaa-Pro-|- bonds to release unblocked, N-terminal dipeptides from substrates including Ala-Pro-|-p-nitroanilide and (sequentially) Tyr-Pro-|-Phe-Pro-|-Gly-Pro-|-Ile.. Its function is as follows. Removes N-terminal dipeptides sequentially from polypeptides having unsubstituted N-termini provided that the penultimate residue is proline. The chain is Xaa-Pro dipeptidyl-peptidase from Streptococcus pyogenes serotype M3 (strain ATCC BAA-595 / MGAS315).